The primary structure comprises 535 residues: Expansin-like protein 9 (535 aa).

An N-terminal signal peptide occupies residues 1–25 (MKINKNNYFKIIIFIIYVIINLINA). Asn24 carries N-linked (GlcNAc...) asparagine glycosylation. Over 26–514 (SDNVKLSNCG…DNSSNILLFS (489 aa)) the chain is Extracellular. Positions 31-144 (LSNCGQARAE…QEVSCGFLGN (114 aa)) constitute an Expansin-like EG45 domain. Disulfide bonds link Cys34-Cys75 and Cys78-Cys139. 3 N-linked (GlcNAc...) asparagine glycosylation sites follow: Asn122, Asn257, and Asn292. Residues 459–487 (VDGSSNDDDGTGGTGGGASNKVGKRVDGE) are disordered. Asn506 carries N-linked (GlcNAc...) asparagine glycosylation. Residues 515–535 (FNITLTFLLLSLIINILLLLF) traverse the membrane as a helical segment.

This sequence belongs to the expansin family. Expansin A subfamily.

It localises to the membrane. May serve to lubricate the movement of the cellulose microfibrils during cell growth and wall extension and/or may serve to maintain the fluid state of the slug cell wall. The sequence is that of Expansin-like protein 9 (expl9) from Dictyostelium discoideum (Social amoeba).